A 184-amino-acid polypeptide reads, in one-letter code: UPF0149 protein PP_5201 (184 aa).

It belongs to the UPF0149 family.

The polypeptide is UPF0149 protein PP_5201 (Pseudomonas putida (strain ATCC 47054 / DSM 6125 / CFBP 8728 / NCIMB 11950 / KT2440)).